Consider the following 315-residue polypeptide: Long form salivary protein D7L2 (315 aa).

Residues 1–18 form the signal peptide; it reads MIVAPVVLSIFLQLFVQA. Disulfide bonds link cysteine 37–cysteine 73, cysteine 69–cysteine 128, cysteine 178–cysteine 211, and cysteine 252–cysteine 263.

Belongs to the PBP/GOBP family. Interacts with host coagulation factor XII/F12 (inactive and activated). Interacts with host coagulation factor XI/F11 (inactive).

The protein resides in the secreted. Functionally, modulates blood feeding of female mosquitoes on vertebrate species by binding and sequestering different mediators involved in the host response. Binds leukotriene B4 and leukotriene D4. Exhibits anticoagulant activity targeting the intrinsic coagulation pathway; binds coagulation factors XII and XI, preventing generation of activated FXIIa and FXIa. The protein is Long form salivary protein D7L2 of Anopheles gambiae (African malaria mosquito).